A 137-amino-acid polypeptide reads, in one-letter code: Endoribonuclease YbeY (137 aa).

Residues histidine 103, histidine 107, and histidine 113 each coordinate Zn(2+).

Belongs to the endoribonuclease YbeY family. Requires Zn(2+) as cofactor.

It is found in the cytoplasm. Its function is as follows. Single strand-specific metallo-endoribonuclease involved in late-stage 70S ribosome quality control and in maturation of the 3' terminus of the 16S rRNA. The polypeptide is Endoribonuclease YbeY (Acholeplasma laidlawii (strain PG-8A)).